Consider the following 111-residue polypeptide: Transcription initiation factor IIA subunit 2 (111 aa).

This sequence belongs to the TFIIA subunit 2 family. As to quaternary structure, TFIIA is a heterodimer of the large unprocessed subunit 1 and a small subunit gamma. It was originally believed to be a heterotrimer of an alpha, a beta and a gamma subunit. Interacts with NCOA6 general coactivator. TFIIA forms a complex with TBP.

It localises to the nucleus. Functionally, TFIIA is a component of the transcription machinery of RNA polymerase II and plays an important role in transcriptional activation. TFIIA in a complex with TBP mediates transcriptional activity. The sequence is that of Transcription initiation factor IIA subunit 2 (gtf2a2) from Paralichthys olivaceus (Bastard halibut).